We begin with the raw amino-acid sequence, 281 residues long: Probable endonuclease 4 (281 aa).

His-69, His-109, Glu-145, Asp-179, His-182, His-216, Asp-229, His-231, and Glu-261 together coordinate Zn(2+).

The protein belongs to the AP endonuclease 2 family. Zn(2+) serves as cofactor.

The catalysed reaction is Endonucleolytic cleavage to 5'-phosphooligonucleotide end-products.. Its function is as follows. Endonuclease IV plays a role in DNA repair. It cleaves phosphodiester bonds at apurinic or apyrimidinic (AP) sites, generating a 3'-hydroxyl group and a 5'-terminal sugar phosphate. The polypeptide is Probable endonuclease 4 (Pectobacterium atrosepticum (strain SCRI 1043 / ATCC BAA-672) (Erwinia carotovora subsp. atroseptica)).